The following is a 255-amino-acid chain: Triosephosphate isomerase (255 aa).

9-11 serves as a coordination point for substrate; sequence NWK. The Electrophile role is filled by His-95. Glu-167 functions as the Proton acceptor in the catalytic mechanism. Substrate contacts are provided by residues Gly-173, Ser-212, and 233–234; that span reads GG.

This sequence belongs to the triosephosphate isomerase family. As to quaternary structure, homodimer.

Its subcellular location is the cytoplasm. The enzyme catalyses D-glyceraldehyde 3-phosphate = dihydroxyacetone phosphate. Its pathway is carbohydrate biosynthesis; gluconeogenesis. It functions in the pathway carbohydrate degradation; glycolysis; D-glyceraldehyde 3-phosphate from glycerone phosphate: step 1/1. In terms of biological role, involved in the gluconeogenesis. Catalyzes stereospecifically the conversion of dihydroxyacetone phosphate (DHAP) to D-glyceraldehyde-3-phosphate (G3P). This Salmonella agona (strain SL483) protein is Triosephosphate isomerase.